The following is a 189-amino-acid chain: Isopentenyl-diphosphate Delta-isomerase 2 (189 aa).

Mn(2+) is bound by residues His24 and His30. Residues 28–160 (ALHRAISIFV…PETYSFWLAA (133 aa)) enclose the Nudix hydrolase domain. Cys65 is a catalytic residue. Cys65 serves as a coordination point for Mg(2+). Mn(2+) is bound at residue His67. Residue Glu85 participates in Mg(2+) binding. Mn(2+) contacts are provided by Glu110 and Glu112. Residue Glu112 is part of the active site.

This sequence belongs to the IPP isomerase type 1 family. The cofactor is Mg(2+). Mn(2+) serves as cofactor.

It is found in the cytoplasm. It catalyses the reaction isopentenyl diphosphate = dimethylallyl diphosphate. It participates in isoprenoid biosynthesis; dimethylallyl diphosphate biosynthesis; dimethylallyl diphosphate from isopentenyl diphosphate: step 1/1. In terms of biological role, catalyzes the 1,3-allylic rearrangement of the homoallylic substrate isopentenyl (IPP) to its highly electrophilic allylic isomer, dimethylallyl diphosphate (DMAPP). This chain is Isopentenyl-diphosphate Delta-isomerase 2, found in Aromatoleum aromaticum (strain DSM 19018 / LMG 30748 / EbN1) (Azoarcus sp. (strain EbN1)).